Consider the following 440-residue polypeptide: COP9 signalosome complex subunit 4 (440 aa).

Residues 216–386 (SNRQFLAASQ…RIIYFESGLE (171 aa)) enclose the PCI domain.

Belongs to the CSN4 family. Component of the COP9 signalosome (CSN) complex.

The protein localises to the cytoplasm. It localises to the nucleus. Component of the COP9 signalosome (CSN) complex that acts as an regulator of the ubiquitin (Ubl) conjugation pathway by mediating the deneddylation of the cullin subunit of SCF-type E3 ubiquitin-protein ligase complexes. The CSN complex is involved in the regulation of the circadian clock through its control of the stability of the SCF(FWD1) complex. The protein is COP9 signalosome complex subunit 4 (csn-4) of Neurospora crassa (strain ATCC 24698 / 74-OR23-1A / CBS 708.71 / DSM 1257 / FGSC 987).